The sequence spans 232 residues: 26.5 kDa heat shock protein, mitochondrial (232 aa).

A mitochondrion-targeting transit peptide spans 1-42; it reads MALARLALRNLQQKLSPSLMGQSCERGLVGNRHNPMKLNRFM. The tract at residues 44–82 is disordered; sequence TSAGEQEDKMNTEVSVSEKKSPRQNFPRRRGRKSLWRNT. Over residues 49–64 the composition is skewed to basic and acidic residues; sequence QEDKMNTEVSVSEKKS. Basic residues predominate over residues 69 to 78; that stretch reads FPRRRGRKSL. One can recognise a sHSP domain in the interval 114–232; sequence IFDNFNVNPF…KKNVQEISVE (119 aa).

This sequence belongs to the small heat shock protein (HSP20) family. In terms of assembly, may form oligomeric structures.

The protein localises to the mitochondrion. In Arabidopsis thaliana (Mouse-ear cress), this protein is 26.5 kDa heat shock protein, mitochondrial (HSP26.5).